Here is a 161-residue protein sequence, read N- to C-terminus: Allophycocyanin alpha chain (161 aa).

Asn71 bears the N4-methylasparagine mark. Cys81 provides a ligand contact to (2R,3E)-phycocyanobilin.

The protein belongs to the phycobiliprotein family. Heterodimer of an alpha and a beta chain. In terms of processing, contains one covalently linked phycocyanobilin chromophore.

The protein localises to the plastid. The protein resides in the cyanelle thylakoid membrane. Functionally, light-harvesting photosynthetic bile pigment-protein from the phycobiliprotein complex. Allophycocyanin has a maximum absorption at approximately 650 nanometers. The chain is Allophycocyanin alpha chain (apcA) from Cyanophora paradoxa.